A 121-amino-acid chain; its full sequence is Phosphoribosyl-ATP pyrophosphatase (121 aa).

It belongs to the PRA-PH family.

The protein localises to the cytoplasm. The enzyme catalyses 1-(5-phospho-beta-D-ribosyl)-ATP + H2O = 1-(5-phospho-beta-D-ribosyl)-5'-AMP + diphosphate + H(+). The protein operates within amino-acid biosynthesis; L-histidine biosynthesis; L-histidine from 5-phospho-alpha-D-ribose 1-diphosphate: step 2/9. The protein is Phosphoribosyl-ATP pyrophosphatase of Burkholderia cenocepacia (strain HI2424).